A 106-amino-acid polypeptide reads, in one-letter code: Small ribosomal subunit protein bS6 (106 aa).

The protein belongs to the bacterial ribosomal protein bS6 family.

In terms of biological role, binds together with bS18 to 16S ribosomal RNA. This is Small ribosomal subunit protein bS6 from Cyanothece sp. (strain PCC 7425 / ATCC 29141).